Reading from the N-terminus, the 465-residue chain is MANTFNPEEDFPEVYKVCKLFNPSIDDLEKIKNAMDREITMGLSRDHHDRSTVPCHLSYVQDLPTGRERGQFLALEMMPTNCRIMLVKFSSERDIYTSSKCVIMPHTVAAGRGTEVFTFLATSIANFVKEKKVDKDNLPLGIAFAFTLKKLALDVGILVSWTKEFGAQGAIGKDVVQLLRDALAKFPEISVDVMGIINVGAGSLLALCWAQPDTRIGLIMGSIANSCYVERVERCETYEGDEYRKLMIINSDWAHFGDTGQLDFIRNEYDRQLDTESINPGTRIYEKFSGALCMGELVRIIVLRLMKSGAIFAEDRRDYIGIQWKLDMVSLIEIVSDPPGVYTKAQEVMDKFRIRHCKERDLAALKYICDTVTNRAAMLVASGVSCLIDRMRLPQISIAVDGGIYRLHPTFSTVLNKYTRLLADPNYNFEFVITQDSCGVGAAIMAGMAHANKYKTDAKLFTMDY.

Positions 8–447 constitute a Hexokinase domain; sequence EEDFPEVYKV…CGVGAAIMAG (440 aa). The segment at 65-197 is hexokinase small subdomain; it reads TGRERGQFLA…EISVDVMGII (133 aa). K88 is an ATP binding site. Positions 139–165 are glucose-binding; sequence PLGIAFAFTLKKLALDVGILVSWTKEF. Residues 198-436 are hexokinase large subdomain; it reads NVGAGSLLAL…YNFEFVITQD (239 aa).

The protein belongs to the hexokinase family.

The catalysed reaction is a D-hexose + ATP = a D-hexose 6-phosphate + ADP + H(+). It catalyses the reaction D-mannose + ATP = D-mannose 6-phosphate + ADP + H(+). It carries out the reaction D-fructose + ATP = D-fructose 6-phosphate + ADP + H(+). The enzyme catalyses D-glucose + ATP = D-glucose 6-phosphate + ADP + H(+). The protein operates within carbohydrate metabolism; hexose metabolism. It functions in the pathway carbohydrate degradation; glycolysis; D-glyceraldehyde 3-phosphate and glycerone phosphate from D-glucose: step 1/4. Its function is as follows. Catalyzes the phosphorylation of various hexoses to hexose 6-phosphate. The chain is Hexokinase type 1 (Hex-t1) from Drosophila melanogaster (Fruit fly).